Here is a 275-residue protein sequence, read N- to C-terminus: Bis(5'-nucleosyl)-tetraphosphatase, symmetrical (275 aa).

The protein belongs to the Ap4A hydrolase family.

It catalyses the reaction P(1),P(4)-bis(5'-adenosyl) tetraphosphate + H2O = 2 ADP + 2 H(+). Functionally, hydrolyzes diadenosine 5',5'''-P1,P4-tetraphosphate to yield ADP. The sequence is that of Bis(5'-nucleosyl)-tetraphosphatase, symmetrical from Haemophilus influenzae (strain PittEE).